The sequence spans 198 residues: ATP synthase subunit b (198 aa).

Residues 25-45 (PLSELLIGTLAFGLLVAFFFW) traverse the membrane as a helical segment.

Belongs to the ATPase B chain family. F-type ATPases have 2 components, F(1) - the catalytic core - and F(0) - the membrane proton channel. F(1) has five subunits: alpha(3), beta(3), gamma(1), delta(1), epsilon(1). F(0) has three main subunits: a(1), b(2) and c(10-14). The alpha and beta chains form an alternating ring which encloses part of the gamma chain. F(1) is attached to F(0) by a central stalk formed by the gamma and epsilon chains, while a peripheral stalk is formed by the delta and b chains.

It is found in the cell membrane. In terms of biological role, f(1)F(0) ATP synthase produces ATP from ADP in the presence of a proton or sodium gradient. F-type ATPases consist of two structural domains, F(1) containing the extramembraneous catalytic core and F(0) containing the membrane proton channel, linked together by a central stalk and a peripheral stalk. During catalysis, ATP synthesis in the catalytic domain of F(1) is coupled via a rotary mechanism of the central stalk subunits to proton translocation. Its function is as follows. Component of the F(0) channel, it forms part of the peripheral stalk, linking F(1) to F(0). In Frankia alni (strain DSM 45986 / CECT 9034 / ACN14a), this protein is ATP synthase subunit b.